The chain runs to 595 residues: Sorting nexin-9 (595 aa).

Residues 1-62 enclose the SH3 domain; the sequence is MATKARVMYD…PTDYVEILPN (62 aa). Low complexity predominate over residues 89–100; that stretch reads QTNSSSANSNNQ. Residues 89–199 form a disordered region; the sequence is QTNSSSANSN…QRGNSRAGAS (111 aa). Position 121 is a phosphoserine (S121). Residues 129–144 are compositionally biased toward polar residues; sequence TDGTSAQRNSSANNWD. Over residues 159–169 the composition is skewed to acidic residues; that stretch reads GDDDEWDEDWD. The residue at position 200 (S200) is a Phosphoserine. Positions 201–213 are critical for tubulation activity; the sequence is MKLPLNKFPGFAK. Y239 bears the Phosphotyrosine mark. The region spanning 250 to 360 is the PX domain; the sequence is FDCVVADPRK…QQFLNFRDEK (111 aa). A 1,2-diacyl-sn-glycero-3-phospho-(1D-myo-inositol-4,5-bisphosphate)-binding residues include R286, K288, and R327. Position 288 is an N6-acetyllysine (K288). A BAR domain is found at 392–595; the sequence is LIEIEQKCDA…RQALSRFPVM (204 aa).

Belongs to the sorting nexin family. Homodimer, and homooligomer. Heterodimer with SNX18. Interacts with ITCH. Interacts (via SH3 domain) with TNK2, WASL and ACTR3. Identified in a complex with TNK2 and clathrin heavy chains. Identified in a complex with the AP-2 complex, clathrin and DNM2. Interacts (via SH3 domain) with DNM1 and DNM2. Identified in an oligomeric complex containing DNM1 and SNX9. Interacts with FCHSD1. Interacts with ADAM9 and ADAM15 cytoplasmic tails. Post-translationally, phosphorylated on tyrosine residues by TNK2. Phosphorylation promotes its activity in the degradation of EGFR. In terms of processing, ubiquitinated by ITCH. As to expression, detected in inner ear vestibula and in the cuticular plate of cochlear hair cells (at protein level).

It is found in the cytoplasmic vesicle membrane. The protein resides in the cell membrane. The protein localises to the cytoplasmic vesicle. Its subcellular location is the clathrin-coated vesicle. It localises to the golgi apparatus. It is found in the trans-Golgi network. The protein resides in the cell projection. The protein localises to the ruffle. Its subcellular location is the cytoplasm. In terms of biological role, involved in endocytosis and intracellular vesicle trafficking, both during interphase and at the end of mitosis. Required for efficient progress through mitosis and cytokinesis. Required for normal formation of the cleavage furrow at the end of mitosis. Plays a role in endocytosis via clathrin-coated pits, but also clathrin-independent, actin-dependent fluid-phase endocytosis. Plays a role in macropinocytosis. Promotes internalization of TNFR. Promotes degradation of EGFR after EGF signaling. Stimulates the GTPase activity of DNM1. Promotes DNM1 oligomerization. Promotes activation of the Arp2/3 complex by WASL, and thereby plays a role in the reorganization of the F-actin cytoskeleton. Binds to membranes enriched in phosphatidylinositol 4,5-bisphosphate and promotes membrane tubulation. Has lower affinity for membranes enriched in phosphatidylinositol 3-phosphate. This is Sorting nexin-9 (Snx9) from Mus musculus (Mouse).